A 193-amino-acid chain; its full sequence is Potassium-transporting ATPase KdpC subunit (193 aa).

Residues 14–34 (ITFTFLVLCGLVYPLIVTGIA) form a helical membrane-spanning segment.

It belongs to the KdpC family. In terms of assembly, the system is composed of three essential subunits: KdpA, KdpB and KdpC.

Its subcellular location is the cell membrane. Part of the high-affinity ATP-driven potassium transport (or Kdp) system, which catalyzes the hydrolysis of ATP coupled with the electrogenic transport of potassium into the cytoplasm. This subunit acts as a catalytic chaperone that increases the ATP-binding affinity of the ATP-hydrolyzing subunit KdpB by the formation of a transient KdpB/KdpC/ATP ternary complex. This chain is Potassium-transporting ATPase KdpC subunit, found in Bacillus cereus (strain B4264).